The chain runs to 2177 residues: Protein sidekick-2 (2177 aa).

The first 26 residues, 1-26, serve as a signal peptide directing secretion; the sequence is MKGLGVPAAALLWGGLSALLPPSLPA. Residues 27–1937 are Extracellular-facing; the sequence is DDVSPYFKTE…ANPFYEEWWF (1911 aa). Ig-like C2-type domains follow at residues 31-113, 118-205, 220-299, 313-401, 407-496, and 501-590; these read PYFK…TEVQ, GSFE…QPIT, PTII…SSVP, PQFV…TYLA, PNIT…ADLV, and TRIT…AHLR. Residues C53 and C96 are joined by a disulfide bond. N198 and N228 each carry an N-linked (GlcNAc...) asparagine glycan. Cystine bridges form between C242–C289 and C335–C385. N-linked (GlcNAc...) asparagine glycosylation occurs at N408. Intrachain disulfides connect C428–C480 and C522–C574. Residues N582, N614, N709, N748, N809, N941, and N953 are each glycosylated (N-linked (GlcNAc...) asparagine). Fibronectin type-III domains lie at 597-693, 698-794, 799-898, 902-996, 1000-1099, 1104-1202, 1207-1304, 1305-1402, 1407-1504, 1509-1626, 1631-1727, 1731-1826, and 1829-1928; these read APES…LPEE, PPQN…TLQG, PPGN…THED, PVGH…VPPE, APTN…TLQA, APAN…TRES, GPSN…TLDD, VPGP…TEKR, PPSK…TLQA, APTI…VGEA, APQN…TQQA, APGS…TGPG, and APGP…AQKA. N1107, N1210, N1261, N1346, N1462, N1580, N1593, N1675, N1694, N1746, and N1820 each carry an N-linked (GlcNAc...) asparagine glycan. The chain crosses the membrane as a helical span at residues 1938–1958; it reads LVVIALVGLIFILLLVFVLII. The Cytoplasmic portion of the chain corresponds to 1959 to 2177; the sequence is RGQSKKYAKK…APIGGFSSFV (219 aa). Disordered stretches follow at residues 2044–2071 and 2103–2177; these read AESS…VDPA and QAYS…SSFV. Composition is skewed to polar residues over residues 2045 to 2063 and 2119 to 2130; these read ESSS…QGSD and PLSNSTSTQQGS. Residues 2142–2151 show a composition bias toward pro residues; sequence PQTPGNPPSQ. The short motif at 2171–2177 is the PDZ-binding element; it reads GGFSSFV.

This sequence belongs to the sidekick family. Homodimer; mediates homophilic interactions to promote cell adhesion. Expressed by non-overlapping subsets of retinal neurons. SDK1, SDK2, DSCAM and DSCAML1 are expressed in non-overlapping subsets of interneurons and retinal ganglion cells (RGCs) that form synapses in distinct inner plexiform layer (IPL) sublaminae.

It localises to the cell membrane. The protein resides in the synapse. In terms of biological role, adhesion molecule that promotes lamina-specific synaptic connections in the retina. Expressed in specific subsets of interneurons and retinal ganglion cells (RGCs) and promotes synaptic connectivity via homophilic interactions. This Gallus gallus (Chicken) protein is Protein sidekick-2.